The primary structure comprises 433 residues: Glutamate--tRNA ligase (433 aa).

The 'HIGH' region motif lies at 10 to 20 (PSPTGYLHIGG). The 'KMSKS' region motif lies at 211–215 (KMSKR). Lys214 provides a ligand contact to ATP.

Belongs to the class-I aminoacyl-tRNA synthetase family. Glutamate--tRNA ligase type 1 subfamily. Monomer.

It is found in the cytoplasm. The catalysed reaction is tRNA(Glu) + L-glutamate + ATP = L-glutamyl-tRNA(Glu) + AMP + diphosphate. Its function is as follows. Catalyzes the attachment of glutamate to tRNA(Glu) in a two-step reaction: glutamate is first activated by ATP to form Glu-AMP and then transferred to the acceptor end of tRNA(Glu). The sequence is that of Glutamate--tRNA ligase from Akkermansia muciniphila (strain ATCC BAA-835 / DSM 22959 / JCM 33894 / BCRC 81048 / CCUG 64013 / CIP 107961 / Muc).